The primary structure comprises 735 residues: MDLGSDQLLPEDYFLAEEGALLEEMAEEDEEIDLYNEVTFGLDQESDEEPTKQEEDHKKPVQIPEAPKIEEPEKPQPIKETKKPEKSPLREVKIVVESDEEHVDRSIDSGGHTMNSTMDDSELGDPAVMRAFHGKPTLESLDSAVVDSGIGSTWSELDTDYDQSGMDSGLWEASPKVSMSATGQILEDKAILRVMERAPYLPPANLEFLGSPLQRGFMPSQRLQRPEMGVMSPKPYRPRFMRQQSPLVPRSMRPPFPFTPPRRGPPIFTPNQSPGFVSQTPFRPMSPNVSTPTRPMTPKMVRMHFGPMSPSPSFSPFFSPMGNALQRFKVPGHVTQLHPQHRRILSQRQRPQSSSRKQWESRPDPYASLMSQKEKEWVIKLQMIQLQSENPHLDDYYYQAYYEKLERKLAEEELLGERKKREPTKLVTPYIQKAEMYESVVHIEGSLGQVAVSTCYSPRRAIDAVSYAMPDEAIKALGYQRLRVLKHTEKVFLLLLEVEELARKMSHIPEEEHAHFQHKQNYKVQRIYDILNMAPCHSEDESENEFLQLLQVGKGKKLIARLLPFLTRVQAGKILLLVVQHLPFLIKNDSAEESLSVLYGPLKNIINGLSFTELIGVIQELTRPLPESSDLPLTLAFQNQFGISLLYCLLSHGERLLSSDMPMEPCIGDFEKWTDTVFLVAKELSHVSKSSMVEPLFLPSNLLSLFCRYLDKQTIHKLEDKMECPAIPPYTAVPS.

Disordered regions lie at residues T39–K93 and Q336–Y366. 2 stretches are compositionally biased toward basic and acidic residues: residues E49–K59 and P67–K93. Low complexity predominate over residues S346–R356.

The protein belongs to the PAT1 family. Interacts with ribonucleoprotein complex components. Interacts with cpeb.

The protein resides in the cytoplasm. It localises to the nucleus. RNA-binding protein that acts as a translational repressor. The sequence is that of Protein PAT1 homolog 2 (patl2) from Xenopus tropicalis (Western clawed frog).